The chain runs to 336 residues: C4-dicarboxylate-binding periplasmic protein DctP (336 aa).

Positions 1 to 31 (MTRLNTCTFIKQIVKMTSIAALLGASLNSWA) are cleaved as a signal peptide. Lys-48, Lys-101, Arg-176, Asn-216, Asn-220, and Tyr-243 together coordinate (S)-malate. Residues Lys-48, Lys-101, Arg-176, Asn-216, Asn-220, and Tyr-243 each contribute to the succinate site.

This sequence belongs to the bacterial solute-binding protein 7 family. As to quaternary structure, the complex comprises the extracytoplasmic solute receptor protein DctP, and the two transmembrane proteins DctQ and DctM.

The protein localises to the periplasm. Part of the tripartite ATP-independent periplasmic (TRAP) transport system DctPQM involved in C4-dicarboxylates uptake. Required for the utilization of succinate, fumarate, L-malate and alpha-ketoglutarate. Binds succinate and malate. The chain is C4-dicarboxylate-binding periplasmic protein DctP from Shewanella loihica (strain ATCC BAA-1088 / PV-4).